Here is a 397-residue protein sequence, read N- to C-terminus: MKILVVNCGSSSLKYQLIDMTSEEALAKGLVERIGIEGSILTQKVNGEKYIIEEPMKDHKKAIELVLQALVDKEHGVISDMSEIAAVGHRVVHGGEKYASSVLINDEVMKALEDCVKLAPLHNPPNIIGINACRELMPKTPMVAVFDTAFHQTLPDYAYMYPLPYELYEQNGIRKYGFHGTSHRYVSSVASEMMEKDLKDIKVITCHLGNGASLCAVKEGKSVETSMGFTPLAGLAMGTRCGDIDPAILLFMERELKMSPDEVDTVINKKSGVLGISGVSSDFRDIEGAAEEGNKRAKLALDVYHYTVRQTIGAYTAVLNGVDAIVFTAGLGENSAASREEILNGLEYLGIKIDAEKNKQRGKQIEISTEDSKVKVFVIPTDEELMIARDTKEITAK.

Asn7 serves as a coordination point for Mg(2+). An ATP-binding site is contributed by Lys14. Substrate is bound at residue Arg90. Asp147 (proton donor/acceptor) is an active-site residue. ATP-binding positions include His207–Gly211, Asp282–Arg284, and Gly330–Asn334. Glu383 lines the Mg(2+) pocket.

Belongs to the acetokinase family. In terms of assembly, homodimer. Mg(2+) serves as cofactor. Requires Mn(2+) as cofactor.

Its subcellular location is the cytoplasm. It catalyses the reaction acetate + ATP = acetyl phosphate + ADP. It participates in metabolic intermediate biosynthesis; acetyl-CoA biosynthesis; acetyl-CoA from acetate: step 1/2. In terms of biological role, catalyzes the formation of acetyl phosphate from acetate and ATP. Can also catalyze the reverse reaction. The sequence is that of Acetate kinase from Clostridium botulinum (strain Langeland / NCTC 10281 / Type F).